We begin with the raw amino-acid sequence, 475 residues long: Solute carrier family 46 member 2 (475 aa).

Over M1–E23 the chain is Cytoplasmic. A helical membrane pass occupies residues P24–V44. Over K45 to Y78 the chain is Extracellular. The N-linked (GlcNAc...) asparagine glycan is linked to N55. Residues I79–L99 form a helical membrane-spanning segment. At S100–S108 the chain is on the cytoplasmic side. A helical membrane pass occupies residues I109–L129. Residues D130–G138 are Extracellular-facing. A helical transmembrane segment spans residues A139–L159. At G160 to R172 the chain is on the cytoplasmic side. A helical membrane pass occupies residues L173–H193. At L194–G205 the chain is on the extracellular side. The chain crosses the membrane as a helical span at residues L206 to V226. Over L227–T282 the chain is Cytoplasmic. Residues I283 to V303 traverse the membrane as a helical segment. The Extracellular segment spans residues I304–V320. Residues G321–F341 traverse the membrane as a helical segment. The Cytoplasmic segment spans residues S342 to D347. The helical transmembrane segment at T348–V368 threads the bilayer. Over K369–E370 the chain is Extracellular. A helical membrane pass occupies residues T371–I391. Topologically, residues R392–K406 are cytoplasmic. Residues V407 to N427 form a helical membrane-spanning segment. The Extracellular segment spans residues K428–D435. A helical transmembrane segment spans residues M436–I456. The Cytoplasmic portion of the chain corresponds to S457–K475.

It belongs to the major facilitator superfamily. SLC46A family. In terms of processing, glycosylated. Strongly expressed in the adult thymus. Expressed in spleen, lymph nodes, thymus, PBL, bone marrow and fetal liver. Expressed in monocytes and pre-dendridic cells.

The protein resides in the endosome membrane. Its subcellular location is the cell membrane. The enzyme catalyses N-acetyl-beta-D-glucosaminyl-(1-&gt;4)-1,6-anhydro-N-acetyl-beta-D-muramoyl-L-alanyl-gamma-D-glutamyl-meso-2,6-diaminopimeloyl-D-alanine(out) + n H(+)(out) = N-acetyl-beta-D-glucosaminyl-(1-&gt;4)-1,6-anhydro-N-acetyl-beta-D-muramoyl-L-alanyl-gamma-D-glutamyl-meso-2,6-diaminopimeloyl-D-alanine(in) + n H(+)(in). It carries out the reaction L-alanyl-gamma-D-glutamyl-meso-2,6-diaminopimelate(out) + n H(+)(out) = L-alanyl-gamma-D-glutamyl-meso-2,6-diaminopimelate(in) + n H(+)(in). The catalysed reaction is N-acetyl-D-muramoyl-L-alanyl-D-isoglutamine(out) + n H(+)(out) = N-acetyl-D-muramoyl-L-alanyl-D-isoglutamine(in) + n H(+)(in). It catalyses the reaction 2',3'-cGAMP(out) + n H(+)(out) = 2',3'-cGAMP(in) + n H(+)(in). The enzyme catalyses 3',3'-cGAMP(out) + n H(+)(out) = 3',3'-cGAMP(in) + n H(+)(in). Proton-coupled transporter that delivers pathogen-associated or danger-associated molecular patterns to cytosolic pattern recognition receptors as part of the innate immune response to microbes or tissue injury. Has selectivity toward muropeptides that contain the amino acid diaminopimelic acid (DAP-type peptidoglycan muropeptides) including Tri-DAP and tracheal toxin (TCT), common in Gram-negative bacteria and Gram-positive bacilli. In the context of immune recognition of skin microbiota, shuttles bacterial muropeptides across the endolysosomal membranes into the cytosol for recognition by NOD1, triggering MYD88-dependent secretion of IL1A and neutrophil recruitment in a pyroptosis-type inflammatory process. To a lesser extent and redundantly, transports muramyl dipeptides derived from most bacterial proteoglycans, eliciting NOD2 receptor activation and downstream inflammatory responses. Postulated to function as a dominant importer of cyclic GMP-AMP dinucleotides (cGAMPs) in monocyte and macrophage cell lineages. Selectively imports cGAMPs derived from pathogenic bacteria such as 3'3'-cGAMP thus providing for differential immune recognition of pathogenic versus commensal bacteria. During tumorigenesis may transport extracellular tumor-derived 2'3'-cGAMP across the plasma membrane of M1-polarized macrophages to activate the anti-tumoral stimulator of interferon genes (STING) pathway. The transport mechanism, its electrogenicity and stoichiometry remain to be elucidated. The chain is Solute carrier family 46 member 2 from Homo sapiens (Human).